A 567-amino-acid chain; its full sequence is Restriction of telomere capping protein 5 (567 aa).

The TLDc domain occupies 289–515; it reads KVMTPALLAQ…IQDVEVWGCG (227 aa).

It belongs to the RTC5 family.

The protein localises to the cytoplasm. May be involved in a process influencing telomere capping. The polypeptide is Restriction of telomere capping protein 5 (RTC5) (Saccharomyces cerevisiae (strain YJM789) (Baker's yeast)).